A 174-amino-acid chain; its full sequence is Translation initiation factor IF-3 (174 aa).

This sequence belongs to the IF-3 family. In terms of assembly, monomer.

Its subcellular location is the cytoplasm. Its function is as follows. IF-3 binds to the 30S ribosomal subunit and shifts the equilibrium between 70S ribosomes and their 50S and 30S subunits in favor of the free subunits, thus enhancing the availability of 30S subunits on which protein synthesis initiation begins. The protein is Translation initiation factor IF-3 of Helicobacter hepaticus (strain ATCC 51449 / 3B1).